The sequence spans 162 residues: Probable chemoreceptor glutamine deamidase CheD (162 aa).

The protein belongs to the CheD family.

It catalyses the reaction L-glutaminyl-[protein] + H2O = L-glutamyl-[protein] + NH4(+). Its function is as follows. Probably deamidates glutamine residues to glutamate on methyl-accepting chemotaxis receptors (MCPs), playing an important role in chemotaxis. The polypeptide is Probable chemoreceptor glutamine deamidase CheD (Clostridium botulinum (strain Alaska E43 / Type E3)).